A 299-amino-acid chain; its full sequence is ATP phosphoribosyltransferase (299 aa).

This sequence belongs to the ATP phosphoribosyltransferase family. Long subfamily. It depends on Mg(2+) as a cofactor.

Its subcellular location is the cytoplasm. It catalyses the reaction 1-(5-phospho-beta-D-ribosyl)-ATP + diphosphate = 5-phospho-alpha-D-ribose 1-diphosphate + ATP. It functions in the pathway amino-acid biosynthesis; L-histidine biosynthesis; L-histidine from 5-phospho-alpha-D-ribose 1-diphosphate: step 1/9. Its activity is regulated as follows. Feedback inhibited by histidine. In terms of biological role, catalyzes the condensation of ATP and 5-phosphoribose 1-diphosphate to form N'-(5'-phosphoribosyl)-ATP (PR-ATP). Has a crucial role in the pathway because the rate of histidine biosynthesis seems to be controlled primarily by regulation of HisG enzymatic activity. The chain is ATP phosphoribosyltransferase from Campylobacter lari (strain RM2100 / D67 / ATCC BAA-1060).